We begin with the raw amino-acid sequence, 454 residues long: NADP-specific glutamate dehydrogenase 1 (454 aa).

The active site involves lysine 110. 174 to 203 is an NAD(+) binding site; the sequence is GVLTGKGLNWGGSLIRPEATGYGLVYYTQA.

The protein belongs to the Glu/Leu/Phe/Val dehydrogenases family. Homohexamer.

The catalysed reaction is L-glutamate + NADP(+) + H2O = 2-oxoglutarate + NH4(+) + NADPH + H(+). This chain is NADP-specific glutamate dehydrogenase 1 (GDH1), found in Saccharomyces uvarum (strain ATCC 76518 / CBS 7001 / CLIB 283 / NBRC 10550 / MCYC 623 / NCYC 2669 / NRRL Y-11845) (Yeast).